A 236-amino-acid chain; its full sequence is Nopaline transport system permease protein NocQ (236 aa).

The ABC transmembrane type-1 domain occupies 21–222 (AMMTVVVAAC…LLSSVSNRGF (202 aa)). The next 4 helical transmembrane spans lie at 25-45 (VVVA…FAAA), 63-83 (VVRG…GGTL), 102-122 (IFVI…TEVI), and 199-219 (QPFT…SVSN).

It belongs to the binding-protein-dependent transport system permease family. HisMQ subfamily.

Its subcellular location is the cell inner membrane. Its function is as follows. Component of the nopaline active transport system probably consisting of four subunits: Q, M, P and T. This system is also capable of transporting octopine provided that catabolic functions are induced with nopaline. The chain is Nopaline transport system permease protein NocQ (nocQ) from Agrobacterium fabrum (strain C58 / ATCC 33970) (Agrobacterium tumefaciens (strain C58)).